A 258-amino-acid chain; its full sequence is Alcohol dehydrogenase 2 (258 aa).

9-33 (IFVGGLGFIGYEACKQLMAKNMASF) contacts NAD(+). S137 provides a ligand contact to substrate. Y150 acts as the Proton acceptor in catalysis.

This sequence belongs to the short-chain dehydrogenases/reductases (SDR) family. As to quaternary structure, homodimer.

It catalyses the reaction a primary alcohol + NAD(+) = an aldehyde + NADH + H(+). The catalysed reaction is a secondary alcohol + NAD(+) = a ketone + NADH + H(+). The protein is Alcohol dehydrogenase 2 (ADH2) of Ceratitis cosyra (Mango fruit fly).